A 778-amino-acid polypeptide reads, in one-letter code: Probable protein kinase DDB_G0291133 (778 aa).

Positions 129-162 (LSINNNNNNNNNNGGYKIPSSVNKNSNNYNSNSN) are disordered. Residues 177–462 (FDVVCKLGSG…LDQILLNENI (286 aa)) form the Protein kinase domain. ATP-binding positions include 183 to 191 (LGSGSFSDV) and K206. D303 serves as the catalytic Proton acceptor. Positions 308 and 321 each coordinate Mg(2+). Disordered regions lie at residues 478–509 (NIENDNNNNNNTDNNNNNNTDNINNDNNDDNN), 562–697 (HFVR…GFYG), and 757–778 (SHPQESDKMSPRNLLSLFQETN). Residues 578–590 (SDEEEDDDDDDDS) are compositionally biased toward acidic residues. Positions 599-651 (SLNNLNNSSSNIGISESNSNNSFSSILEENNESSSSSPLPSLSFSRRLSTSSL) are enriched in low complexity. A compositionally biased stretch (polar residues) spans 652–670 (VTTISPKPNFNTSGNKLFS). Over residues 671 to 693 (NENNNSNNNNNNNNNNQNNNNNN) the composition is skewed to low complexity. The span at 757–766 (SHPQESDKMS) shows a compositional bias: basic and acidic residues.

It belongs to the protein kinase superfamily. Ser/Thr protein kinase family. WEE1 subfamily.

The catalysed reaction is L-seryl-[protein] + ATP = O-phospho-L-seryl-[protein] + ADP + H(+). It carries out the reaction L-threonyl-[protein] + ATP = O-phospho-L-threonyl-[protein] + ADP + H(+). This is Probable protein kinase DDB_G0291133 from Dictyostelium discoideum (Social amoeba).